Reading from the N-terminus, the 264-residue chain is 3-methyl-2-oxobutanoate hydroxymethyltransferase (264 aa).

Mg(2+)-binding residues include Asp45 and Asp84. Residues 45–46 (DS), Asp84, and Lys113 contribute to the 3-methyl-2-oxobutanoate site. Glu115 contributes to the Mg(2+) binding site. Glu182 (proton acceptor) is an active-site residue.

Belongs to the PanB family. Homodecamer; pentamer of dimers. Mg(2+) is required as a cofactor.

Its subcellular location is the cytoplasm. It carries out the reaction 3-methyl-2-oxobutanoate + (6R)-5,10-methylene-5,6,7,8-tetrahydrofolate + H2O = 2-dehydropantoate + (6S)-5,6,7,8-tetrahydrofolate. It functions in the pathway cofactor biosynthesis; (R)-pantothenate biosynthesis; (R)-pantoate from 3-methyl-2-oxobutanoate: step 1/2. Its function is as follows. Catalyzes the reversible reaction in which hydroxymethyl group from 5,10-methylenetetrahydrofolate is transferred onto alpha-ketoisovalerate to form ketopantoate. The chain is 3-methyl-2-oxobutanoate hydroxymethyltransferase from Helicobacter hepaticus (strain ATCC 51449 / 3B1).